A 245-amino-acid polypeptide reads, in one-letter code: 1-(5-phosphoribosyl)-5-[(5-phosphoribosylamino)methylideneamino] imidazole-4-carboxamide isomerase (245 aa).

Aspartate 7 (proton acceptor) is an active-site residue. Aspartate 129 acts as the Proton donor in catalysis.

The protein belongs to the HisA/HisF family.

The protein localises to the cytoplasm. It catalyses the reaction 1-(5-phospho-beta-D-ribosyl)-5-[(5-phospho-beta-D-ribosylamino)methylideneamino]imidazole-4-carboxamide = 5-[(5-phospho-1-deoxy-D-ribulos-1-ylimino)methylamino]-1-(5-phospho-beta-D-ribosyl)imidazole-4-carboxamide. It functions in the pathway amino-acid biosynthesis; L-histidine biosynthesis; L-histidine from 5-phospho-alpha-D-ribose 1-diphosphate: step 4/9. The polypeptide is 1-(5-phosphoribosyl)-5-[(5-phosphoribosylamino)methylideneamino] imidazole-4-carboxamide isomerase (Shewanella baltica (strain OS223)).